The sequence spans 254 residues: N-acetylglucosaminyldiphosphoundecaprenol N-acetyl-beta-D-mannosaminyltransferase (254 aa).

This sequence belongs to the glycosyltransferase 26 family. TagA/TarA subfamily.

The enzyme catalyses UDP-N-acetyl-alpha-D-mannosamine + N-acetyl-alpha-D-glucosaminyl-di-trans,octa-cis-undecaprenyl diphosphate = N-acetyl-beta-D-mannosaminyl-(1-&gt;4)-N-acetyl-alpha-D-glucosaminyl di-trans,octa-cis-undecaprenyl diphosphate + UDP + H(+). The protein operates within cell wall biogenesis; poly(ribitol phosphate) teichoic acid biosynthesis. Catalyzes the conversion of GlcNAc-PP-undecaprenol into ManNAc-GlcNAc-PP-undecaprenol, the first committed lipid intermediate in the de novo synthesis of teichoic acid. The sequence is that of N-acetylglucosaminyldiphosphoundecaprenol N-acetyl-beta-D-mannosaminyltransferase from Staphylococcus aureus (strain NCTC 8325 / PS 47).